The primary structure comprises 70 residues: Large ribosomal subunit protein bL31 (70 aa).

Zn(2+)-binding residues include cysteine 16, cysteine 18, cysteine 37, and cysteine 40.

It belongs to the bacterial ribosomal protein bL31 family. Type A subfamily. As to quaternary structure, part of the 50S ribosomal subunit. Zn(2+) is required as a cofactor.

In terms of biological role, binds the 23S rRNA. This chain is Large ribosomal subunit protein bL31, found in Desulfovibrio desulfuricans (strain ATCC 27774 / DSM 6949 / MB).